Reading from the N-terminus, the 175-residue chain is Protein MODIFYING WALL LIGNIN-1 (175 aa).

The N-terminal stretch at 1-24 is a signal peptide; the sequence is MFIFLFGLAAFFLCLSAEFQKAKA. The Cytoplasmic segment spans residues 25-52; it reads LLRAQVFLKGKDLKWDGESCYLPENRAF. The helical transmembrane segment at 53–73 threads the bilayer; sequence GLGIAALVCVSVAQIVGNVVI. Residues 74 to 86 lie on the Extracellular side of the membrane; that stretch reads CRGFTKTDKTRTT. The chain crosses the membrane as a helical span at residues 87 to 107; it reads IFCIILLLFSWVNFAVAVTLI. Residues 108–135 are Cytoplasmic-facing; sequence SVGASMNREQIYGKGWLNRECYLVKDGV. A helical membrane pass occupies residues 136–156; it reads FAASGFLSVTTMAAILGAFAF. Residues 157–175 lie on the Extracellular side of the membrane; sequence KVKPSLQVENHDKRHTQNV.

This sequence belongs to the DESIGUAL family. Interacts with CRK19.

The protein localises to the cell membrane. Its function is as follows. Together with MWL2, contributes to secondary cell wall biology, specifically lignin biosynthesis. The polypeptide is Protein MODIFYING WALL LIGNIN-1 (Arabidopsis thaliana (Mouse-ear cress)).